Here is a 288-residue protein sequence, read N- to C-terminus: Light-independent protochlorophyllide reductase iron-sulfur ATP-binding protein (288 aa).

Residues 10 to 15 (GIGKST) and K39 each bind ATP. S14 is a Mg(2+) binding site. Residues C95 and C129 each contribute to the [4Fe-4S] cluster site. 180–181 (NR) contributes to the ATP binding site.

This sequence belongs to the NifH/BchL/ChlL family. As to quaternary structure, homodimer. Protochlorophyllide reductase is composed of three subunits; ChlL, ChlN and ChlB. The cofactor is [4Fe-4S] cluster.

The enzyme catalyses chlorophyllide a + oxidized 2[4Fe-4S]-[ferredoxin] + 2 ADP + 2 phosphate = protochlorophyllide a + reduced 2[4Fe-4S]-[ferredoxin] + 2 ATP + 2 H2O. Its pathway is porphyrin-containing compound metabolism; chlorophyll biosynthesis (light-independent). Component of the dark-operative protochlorophyllide reductase (DPOR) that uses Mg-ATP and reduced ferredoxin to reduce ring D of protochlorophyllide (Pchlide) to form chlorophyllide a (Chlide). This reaction is light-independent. The L component serves as a unique electron donor to the NB-component of the complex, and binds Mg-ATP. The sequence is that of Light-independent protochlorophyllide reductase iron-sulfur ATP-binding protein from Nostoc sp. (strain PCC 7120 / SAG 25.82 / UTEX 2576).